Consider the following 318-residue polypeptide: Cyclic AMP receptor-like protein F (318 aa).

At 1 to 3 the chain is on the extracellular side; sequence MKD. A helical transmembrane segment spans residues 4 to 24; it reads IILIYMICAPISMIGSLFIII. At 25-38 the chain is on the cytoplasmic side; that stretch reads TWLLYAKLKNSGSN. The chain crosses the membrane as a helical span at residues 39-59; that stretch reads FIFFQAISDFFFTSKYIITII. Residues 60-83 are Extracellular-facing; the sequence is FYYINIPQFSDETSSTDTNPYCFS. An intrachain disulfide couples C81 to C177. The chain crosses the membrane as a helical span at residues 84–104; it reads LGLFSQFFGQATIMWSYTMTV. The Cytoplasmic portion of the chain corresponds to 105–145; it reads KVFHSYFEMKKKNNNNNIGSNNIGGGGGGNNSNKQNSIDKT. A helical membrane pass occupies residues 146–166; sequence LKWYHLFVWGFCLVNATIIGI. Topologically, residues 167–187 are extracellular; it reads SKQYGPSSTGCWIVGANNPYR. Residues 188-208 traverse the membrane as a helical segment; the sequence is FFELVPLYFTITTSIIILILI. Over 209 to 234 the chain is Cytoplasmic; the sequence is LVKMKKSKPSSLLPTESMRYNQQARE. The chain crosses the membrane as a helical span at residues 235 to 255; that stretch reads FKIQLMKFVLIFIIFWLPATV. At 256 to 267 the chain is on the extracellular side; sequence LRTLEYFGIEKT. Residues 268–288 form a helical membrane-spanning segment; sequence FFILLDAVSVSLQALANSLVW. The Cytoplasmic portion of the chain corresponds to 289–318; it reads ATSPQFLKLMKRKVVNKPNKQMEREYLINK.

The protein belongs to the G-protein coupled receptor 5 family.

It localises to the membrane. In terms of biological role, receptor for cAMP. This Dictyostelium discoideum (Social amoeba) protein is Cyclic AMP receptor-like protein F (crlF).